A 298-amino-acid chain; its full sequence is Isochorismatase domain-containing protein 1 (298 aa).

Tyr-160 bears the Phosphotyrosine mark. Residue Lys-279 is modified to N6-succinyllysine.

It belongs to the isochorismatase family.

The sequence is that of Isochorismatase domain-containing protein 1 (ISOC1) from Bos taurus (Bovine).